A 295-amino-acid polypeptide reads, in one-letter code: Aspartate carbamoyltransferase catalytic subunit (295 aa).

2 residues coordinate carbamoyl phosphate: arginine 49 and threonine 50. An L-aspartate-binding site is contributed by lysine 77. Residues arginine 99, histidine 127, and glutamine 130 each contribute to the carbamoyl phosphate site. L-aspartate is bound by residues arginine 161 and arginine 212. Carbamoyl phosphate is bound by residues glycine 251 and proline 252.

This sequence belongs to the aspartate/ornithine carbamoyltransferase superfamily. ATCase family. In terms of assembly, heterododecamer (2C3:3R2) of six catalytic PyrB chains organized as two trimers (C3), and six regulatory PyrI chains organized as three dimers (R2).

The catalysed reaction is carbamoyl phosphate + L-aspartate = N-carbamoyl-L-aspartate + phosphate + H(+). It functions in the pathway pyrimidine metabolism; UMP biosynthesis via de novo pathway; (S)-dihydroorotate from bicarbonate: step 2/3. Its function is as follows. Catalyzes the condensation of carbamoyl phosphate and aspartate to form carbamoyl aspartate and inorganic phosphate, the committed step in the de novo pyrimidine nucleotide biosynthesis pathway. The polypeptide is Aspartate carbamoyltransferase catalytic subunit (Campylobacter jejuni subsp. jejuni serotype O:2 (strain ATCC 700819 / NCTC 11168)).